Here is a 217-residue protein sequence, read N- to C-terminus: Ribonuclease T (217 aa).

In terms of domain architecture, Exonuclease spans 20 to 195 (VVVDVETAGL…YDTERTAMLF (176 aa)). Mg(2+) contacts are provided by aspartate 23, glutamate 25, histidine 182, and aspartate 187. The active-site Proton donor/acceptor is histidine 182.

This sequence belongs to the RNase T family. As to quaternary structure, homodimer. It depends on Mg(2+) as a cofactor.

In terms of biological role, trims short 3' overhangs of a variety of RNA species, leaving a one or two nucleotide 3' overhang. Responsible for the end-turnover of tRNA: specifically removes the terminal AMP residue from uncharged tRNA (tRNA-C-C-A). Also appears to be involved in tRNA biosynthesis. The chain is Ribonuclease T from Blochmanniella pennsylvanica (strain BPEN).